The primary structure comprises 150 residues: Arginine repressor (150 aa).

This sequence belongs to the ArgR family.

Its subcellular location is the cytoplasm. It functions in the pathway amino-acid biosynthesis; L-arginine biosynthesis [regulation]. In terms of biological role, regulates arginine biosynthesis genes. The protein is Arginine repressor of Clostridium botulinum (strain Okra / Type B1).